The sequence spans 78 residues: COP9 signalosome complex subunit 5b (78 aa).

The protein belongs to the peptidase M67A family. CSN5 subfamily. Component of the CSN complex, probably composed of CSN1, CSN2, CSN3, CSN4, CSN5 (CSN5A or CSN5B), CSN6 (CSN6A or CSN6B), CSN7 and CSN8. A divalent metal cation is required as a cofactor.

The protein localises to the cytoplasm. It is found in the nucleus. In terms of biological role, probable protease subunit of the COP9 signalosome complex (CSN), a complex involved in various cellular and developmental processes such as photomorphogenesis and auxin and jasmonate responses. The CSN complex is an essential regulator of the ubiquitin (Ubl) conjugation pathway by mediating the deneddylation of the cullin subunits of the SCF-type E3 ligase complexes, leading to decrease the Ubl ligase activity of SCF. In the complex, it probably acts as the catalytic center that mediates the cleavage of Nedd8 from cullins. It however has no metalloprotease activity by itself and requires the other subunits of the CSN complex. The CSN complex is involved in repression of photomorphogenesis in darkness by regulating the activity of COP1-containing Ubl ligase complexes. In Brassica oleracea (Wild cabbage), this protein is COP9 signalosome complex subunit 5b (CSN5B).